A 104-amino-acid chain; its full sequence is Co-chaperonin GroES 5 (104 aa).

The protein belongs to the GroES chaperonin family. As to quaternary structure, heptamer of 7 subunits arranged in a ring. Interacts with the chaperonin GroEL.

The protein resides in the cytoplasm. In terms of biological role, together with the chaperonin GroEL, plays an essential role in assisting protein folding. The GroEL-GroES system forms a nano-cage that allows encapsulation of the non-native substrate proteins and provides a physical environment optimized to promote and accelerate protein folding. GroES binds to the apical surface of the GroEL ring, thereby capping the opening of the GroEL channel. The protein is Co-chaperonin GroES 5 of Rhizobium meliloti (strain 1021) (Ensifer meliloti).